Consider the following 117-residue polypeptide: Non-specific lipid-transfer protein 1 (117 aa).

Positions 1–26 (MAYSAMTKLALVVALCMVVSVPIAQA) are cleaved as a signal peptide. Cystine bridges form between Cys29–Cys76, Cys39–Cys53, Cys54–Cys99, and Cys74–Cys113.

It belongs to the plant LTP family.

Plant non-specific lipid-transfer proteins transfer phospholipids as well as galactolipids across membranes. May play a role in wax or cutin deposition in the cell walls of expanding epidermal cells and certain secretory tissues. This chain is Non-specific lipid-transfer protein 1, found in Prunus dulcis (Almond).